Here is a 326-residue protein sequence, read N- to C-terminus: tRNA N6-adenosine threonylcarbamoyltransferase (326 aa).

His113 and His117 together coordinate Fe cation. Substrate is bound by residues 134–138 (VASGG), Asp167, Gly180, and Asn267. Asp291 provides a ligand contact to Fe cation.

This sequence belongs to the KAE1 / TsaD family. It depends on Fe(2+) as a cofactor.

The protein localises to the cytoplasm. It carries out the reaction L-threonylcarbamoyladenylate + adenosine(37) in tRNA = N(6)-L-threonylcarbamoyladenosine(37) in tRNA + AMP + H(+). Its function is as follows. Required for the formation of a threonylcarbamoyl group on adenosine at position 37 (t(6)A37) in tRNAs that read codons beginning with adenine. Is involved in the transfer of the threonylcarbamoyl moiety of threonylcarbamoyl-AMP (TC-AMP) to the N6 group of A37, together with TsaE and TsaB. TsaD likely plays a direct catalytic role in this reaction. This Thermus thermophilus (strain ATCC 27634 / DSM 579 / HB8) protein is tRNA N6-adenosine threonylcarbamoyltransferase.